A 105-amino-acid chain; its full sequence is POU domain, class 3, transcription factor 3 (105 aa).

Residues 1–49 (QADVGLALGTLYGNVFSQTTICRFEALQLSFKNMCKLKPLLNKWLEEAD) enclose the POU-specific domain. The homeobox DNA-binding region spans 67 to 105 (KRKKRTSIEVSVKGALESHFLKCPKPAAQEITTLADSLQ).

It belongs to the POU transcription factor family. Class-3 subfamily.

It localises to the nucleus. The sequence is that of POU domain, class 3, transcription factor 3 (pou3f3) from Xenopus laevis (African clawed frog).